Here is a 219-residue protein sequence, read N- to C-terminus: Uracil-DNA glycosylase (219 aa).

Catalysis depends on D62, which acts as the Proton acceptor.

This sequence belongs to the uracil-DNA glycosylase (UDG) superfamily. UNG family.

It is found in the cytoplasm. It carries out the reaction Hydrolyzes single-stranded DNA or mismatched double-stranded DNA and polynucleotides, releasing free uracil.. Functionally, excises uracil residues from the DNA which can arise as a result of misincorporation of dUMP residues by DNA polymerase or due to deamination of cytosine. The protein is Uracil-DNA glycosylase of Lactococcus lactis subsp. cremoris (strain MG1363).